We begin with the raw amino-acid sequence, 104 residues long: Large ribosomal subunit protein uL24 (104 aa).

This sequence belongs to the universal ribosomal protein uL24 family. Part of the 50S ribosomal subunit.

One of two assembly initiator proteins, it binds directly to the 5'-end of the 23S rRNA, where it nucleates assembly of the 50S subunit. In terms of biological role, one of the proteins that surrounds the polypeptide exit tunnel on the outside of the subunit. This Photobacterium profundum (strain SS9) protein is Large ribosomal subunit protein uL24.